Here is a 390-residue protein sequence, read N- to C-terminus: Protein arginine N-methyltransferase 1.1 (390 aa).

Over residues 1–10 (MTKNSNHDEN) the composition is skewed to basic and acidic residues. A disordered region spans residues 1–59 (MTKNSNHDENEFISFEPNQNTKIRFEDADEDEVAEGSGVAGEETPQDESMFDAGESADT). Residues 69 to 390 (ADYYFDSYSH…ISRTQHYKMR (322 aa)) enclose the SAM-dependent MTase PRMT-type domain. Residues glutamate 181 and glutamate 190 contribute to the active site.

Belongs to the class I-like SAM-binding methyltransferase superfamily. Protein arginine N-methyltransferase family. Interacts with PRMT12, MBD7 and FIB2.

The protein resides in the nucleus. Its subcellular location is the cytoplasm. It carries out the reaction L-arginyl-[protein] + 2 S-adenosyl-L-methionine = N(omega),N(omega)-dimethyl-L-arginyl-[protein] + 2 S-adenosyl-L-homocysteine + 2 H(+). Its function is as follows. Methylates (mono and asymmetric dimethylation) the guanidino nitrogens of arginyl residues present in a glycine and arginine-rich domain. Type I arginine methyltransferase active on both histones and non-histone proteins. Required for leaves and flowers development. Mediates the methylation of MBD7 and MED36A. This Arabidopsis thaliana (Mouse-ear cress) protein is Protein arginine N-methyltransferase 1.1 (PRMT11).